We begin with the raw amino-acid sequence, 327 residues long: D-alanine--D-alanine ligase (327 aa).

The 200-residue stretch at 113-312 (KRLWMTHGLA…YEDFVMQVLA (200 aa)) folds into the ATP-grasp domain. 139–194 (VADLGLPLIVKPAREGSSIGLTKVIAADQMRAAFEKAAGLDADVIAETFIDGAELT) is an ATP binding site. D266, E279, and N281 together coordinate Mg(2+).

It belongs to the D-alanine--D-alanine ligase family. The cofactor is Mg(2+). Mn(2+) is required as a cofactor.

The protein localises to the cytoplasm. The enzyme catalyses 2 D-alanine + ATP = D-alanyl-D-alanine + ADP + phosphate + H(+). It participates in cell wall biogenesis; peptidoglycan biosynthesis. Functionally, cell wall formation. The chain is D-alanine--D-alanine ligase from Cupriavidus metallidurans (strain ATCC 43123 / DSM 2839 / NBRC 102507 / CH34) (Ralstonia metallidurans).